Consider the following 481-residue polypeptide: Glutamate--tRNA ligase (481 aa).

The short motif at 9 to 19 (PSPTGNLHIGT) is the 'HIGH' region element. The short motif at 247–251 (KLSKR) is the 'KMSKS' region element. Lysine 250 is an ATP binding site.

The protein belongs to the class-I aminoacyl-tRNA synthetase family. Glutamate--tRNA ligase type 1 subfamily. Monomer.

Its subcellular location is the cytoplasm. It carries out the reaction tRNA(Glu) + L-glutamate + ATP = L-glutamyl-tRNA(Glu) + AMP + diphosphate. Its function is as follows. Catalyzes the attachment of glutamate to tRNA(Glu) in a two-step reaction: glutamate is first activated by ATP to form Glu-AMP and then transferred to the acceptor end of tRNA(Glu). The polypeptide is Glutamate--tRNA ligase (Trichormus variabilis (strain ATCC 29413 / PCC 7937) (Anabaena variabilis)).